We begin with the raw amino-acid sequence, 184 residues long: GTP-binding protein Rheb (184 aa).

Lysine 8 is covalently cross-linked (Glycyl lysine isopeptide (Lys-Gly) (interchain with G-Cter in ubiquitin)). Residues serine 16, valine 17, glycine 18, lysine 19, serine 20, serine 21, valine 32, and aspartate 33 each coordinate GDP. Residue serine 16 participates in GTP binding. Residues glycine 18, lysine 19, serine 20, serine 21, and valine 32 each contribute to the GTP site. A Mg(2+)-binding site is contributed by serine 20. GTP-binding residues include tyrosine 35, threonine 38, asparagine 119, and aspartate 122. The Effector region motif lies at 35 to 43 (YDPTIENTF). Threonine 38 provides a ligand contact to Mg(2+). 2 residues coordinate GDP: asparagine 119 and aspartate 122. Residue serine 130 is modified to Phosphoserine; by MAPKAPK5. Alanine 150 contacts GDP. Alanine 150 is a GTP binding site. Residue cysteine 181 is modified to Cysteine methyl ester. Cysteine 181 carries S-farnesyl cysteine lipidation. A propeptide spans 182–184 (SVM) (removed in mature form).

It belongs to the small GTPase superfamily. Rheb family. As to quaternary structure, associates with the mTORC1 complex (MTOR, MLST8 and RPTOR) in a guanyl nucleotide-independent manner. Interacts with TSC2. Interacts with MCRS1; the interaction maintains RHEB at the lysosome in its active GTP-bound form and prevents its interaction with the mTORC1 complex inhibitor TSC2, ensuring activation of the mTORC1 complex by RHEB. Interacts (when prenylated) with PDE6D; this promotes release from membranes. In terms of processing, farnesylation is important for efficiently activating mTORC1-mediated signaling. Polyubiquitinated in response to amino acid, promoting its interaction with MTOR and mTORC1 activation. Deubiquitination by ATXN3 promotes recruitment of the TSC-TBC complex and RHEB inactivation by TSC2. Monoubiquitinated at Lys-8 by RNF152, promoting its association with the TSC-TBC complex. Deubiquitinated at Lys-8 by USP4, promoting mTORC1 activation. Post-translationally, phosphorylation by MAPKAPK5 impairs GTP-binding and inactivation. Ubiquitous. Highest levels observed in skeletal and cardiac muscle.

The protein localises to the endomembrane system. It localises to the lysosome membrane. It is found in the golgi apparatus membrane. Its subcellular location is the endoplasmic reticulum membrane. The protein resides in the cytoplasm. The protein localises to the cytosol. The catalysed reaction is GTP + H2O = GDP + phosphate + H(+). Alternates between an inactive form bound to GDP and an active form bound to GTP. Inactivated by the TSC-TBC complex via the GTPase activating protein (GAP) domain of TSC2. Autoinhibited by Tyr-35, which constrains the active site conformation, restricting the access of the catalytic Asp-65 to the nucleotide-binding pocket. Specifically inhibited by NR1 (4-bromo-6-(3,4-dichlorophenylthio)-1-(4-(dimethylcarbamoyl)benzyl)-1H-indole-2-carboxylic acid). In terms of biological role, small GTPase that acts as an allosteric activator of the canonical mTORC1 complex, an evolutionarily conserved central nutrient sensor that stimulates anabolic reactions and macromolecule biosynthesis to promote cellular biomass generation and growth. In response to nutrients, growth factors or amino acids, specifically activates the protein kinase activity of MTOR, the catalytic component of the mTORC1 complex: acts by causing a conformational change that allows the alignment of residues in the active site of MTOR, thereby enhancing the phosphorylation of ribosomal protein S6 kinase (RPS6KB1 and RPS6KB2) and EIF4EBP1 (4E-BP1). RHEB is also required for localization of the TSC-TBC complex to lysosomal membranes. In response to starvation, RHEB is inactivated by the TSC-TBC complex, preventing activation of mTORC1. Has low intrinsic GTPase activity. The chain is GTP-binding protein Rheb from Homo sapiens (Human).